The following is a 1202-amino-acid chain: Metabotropic glycine receptor (1202 aa).

The signal sequence occupies residues 1 to 24 (MGAMAYSLLLCLLLAHLGLGEVGA). A disordered region spans residues 25–62 (SLDPSERPDSSRERTSRGKQHGQQLPRASAPDPSIPWS). The Extracellular segment spans residues 25–417 (SLDPSERPDS…CFVQEDKYLR (393 aa)). Basic and acidic residues predominate over residues 28 to 40 (PSERPDSSRERTS). Positions 85-281 (YLYTGDFHQL…CENGSYKPGW (197 aa)) are cache-like region. 2 N-linked (GlcNAc...) asparagine glycosylation sites follow: Asn-98 and Asn-143. A disulfide bond links Cys-99 and Cys-272. The glycine site is built by Ser-172 and Arg-173. Asn-215 carries an N-linked (GlcNAc...) asparagine glycan. Positions 234 to 253 (LHRRGSNQGPRGLGHSWRRR) are disordered. Glu-271 serves as a coordination point for glycine. An N-linked (GlcNAc...) asparagine glycan is attached at Asn-274. A glycine-binding site is contributed by Asp-307. N-linked (GlcNAc...) asparagine glycosylation occurs at Asn-333. A helical transmembrane segment spans residues 418–439 (LAIISFQALCMLLDFVSMLVVY). Residues 440–451 (HFRKAKSIRASG) lie on the Cytoplasmic side of the membrane. Residues 452–474 (LILLETILFGSLLLYFPVVILYF) traverse the membrane as a helical segment. Residues 475–478 (EPST) lie on the Extracellular side of the membrane. Residues 479–501 (FRCILLRWVRLLGFATVYGTVTL) form a helical membrane-spanning segment. Cys-481 and Cys-573 are oxidised to a cystine. At 502-525 (KLHRVLKVFLSRTAQRIPYMTGGR) the chain is on the cytoplasmic side. Residues 526-547 (VMRMLAVIVLVVFWFLVGWTSS) traverse the membrane as a helical segment. Topologically, residues 548–576 (MCQNLERDILLVGQGQTSDNLTFNMCLID) are extracellular. The helical transmembrane segment at 577–597 (RWDYMTAVAEFLFLLWGIYLC) threads the bilayer. Residues 598 to 611 (YAVRTVPSAFHEPR) lie on the Cytoplasmic side of the membrane. Residues 612–633 (YMAVAVHNELIITAIFHTIRFV) traverse the membrane as a helical segment. Topologically, residues 634–642 (LASRLQPDW) are extracellular. Residues 643–664 (MLMLYFAHTHLTVTVTIGLLLI) form a helical membrane-spanning segment. Over 665-1202 (PKFSHSSNNP…SASKIPGPRK (538 aa)) the chain is Cytoplasmic. Phosphoserine is present on residues Ser-694, Ser-705, and Ser-708. Disordered regions lie at residues 757–899 (RITE…TSML) and 914–995 (LGLA…QIKD). 2 stretches are compositionally biased toward basic and acidic residues: residues 769 to 781 (CSKE…DHSA) and 819 to 828 (STYDHVRDQT). Lys-774 is covalently cross-linked (Glycyl lysine isopeptide (Lys-Gly) (interchain with G-Cter in ubiquitin)). A compositionally biased stretch (low complexity) spans 845–856 (ENSTLESLSSKK). Ser-865 is subject to Phosphoserine. Over residues 925–943 (MEDRAKSQKPQPKDRETNR) the composition is skewed to basic and acidic residues. Polar residues-rich tracts occupy residues 944-958 (KYSN…PNSN) and 975-994 (QRVN…TQIK). Ser-946 is modified (phosphoserine). Residues 1002–1006 (VCPWE) carry the VCPWE motif 1 motif. Ser-1061 carries the phosphoserine modification. The VCPWE motif 2 motif lies at 1067-1071 (VCPWE). Ser-1076 carries the post-translational modification Phosphoserine. Composition is skewed to polar residues over residues 1132 to 1144 (QMGD…SSSV) and 1151 to 1162 (CISSNNSPQPLT). The disordered stretch occupies residues 1132–1162 (QMGDQEKQTSSSVDIIPGSCISSNNSPQPLT). A VCPWE motif 3 motif is present at residues 1167–1171 (VCPWE).

The protein belongs to the G-protein coupled receptor 3 family. As to quaternary structure, homodimer. Associates with the RGS7-GNB5 complex, promoting its localization to the cell membrane and regulating its GTPase activator activity. Interacts (via VCPWE motifs) with GNAO1. Interacts with GPC4. Interacts with EGFLAM.

It localises to the cell membrane. The protein resides in the postsynaptic cell membrane. The protein localises to the presynaptic cell membrane. It is found in the nucleus. Metabotropic receptor for glycine that controls synapse formation and function in the brain. Acts as an atypical G-protein coupled receptor that recruits and regulates the RGS7-GNB5 complex instead of activating G proteins. In absence of glycine ligand, promotes the GTPase activator activity of RGS7, increasing the GTPase activity of G protein alpha subunits, thereby driving them into their inactive GDP-bound form. Glycine-binding changes the conformation of the intracellular surface, inhibiting the GTPase activator activity of the RGS7-GNB5 complex, promoting G protein alpha subunits into their active GTP-bound form and regulating cAMP levels. Also able to bind taurine, a compound closely related to glycine, but with a two-fold lower affinity. Glycine receptor-dependent regulation of cAMP controls key ion channels, kinases and neurotrophic factors involved in neuronal excitability and synaptic transmission. Plays a pivotal role in regulating mood and cognition via its ability to regulate neuronal excitability in L2/L3 pyramidal neurons of the prefrontal cortex. Also involved in spatial learning by regulating hippocampal CA1 neuronal excitability. Acts as a synaptic organizer in the hippocampus, required for proper mossy fiber-CA3 neurocircuitry establishment, structure and function: induces presynaptic differentiation in contacting axons via its interaction with GPC4. In addition to glycine, may also act as a receptor for osteocalcin (BGLAP) hormone: osteocalcin-binding initiates a signaling response that prevents neuronal apoptosis in the hippocampus and regulates the synthesis of neurotransmitters. This is Metabotropic glycine receptor from Rattus norvegicus (Rat).